The primary structure comprises 340 residues: Extracellular matrix protein-binding protein emp (340 aa).

A signal peptide spans 1-26 (MKKKLLVLTMSTLFATQLINSNHANA).

Its subcellular location is the cell surface. Functionally, adhesin that binds to the host cell extracellular matrix proteins fibronectin, fibrinogen, collagen, and vitronectin. This Staphylococcus aureus protein is Extracellular matrix protein-binding protein emp (emp).